A 772-amino-acid polypeptide reads, in one-letter code: General transcription and DNA repair factor IIH helicase subunit XPD (772 aa).

The region spanning 7 to 283 is the Helicase ATP-binding domain; that stretch reads DLPILFPYPR…QSDSKKLQDE (277 aa). Residue 42–49 participates in ATP binding; the sequence is MPSGTGKT. Residues cysteine 115, cysteine 133, cysteine 154, and cysteine 189 each coordinate [4Fe-4S] cluster. Residues 233–236 carry the DEAH box motif; it reads DEAH.

The protein belongs to the helicase family. RAD3/XPD subfamily. As to quaternary structure, component of the 7-subunit TFIIH core complex composed of XPB/ptr8, XPD/rad15, ssl1, tfb1, tfb2, tfb4 and tfb5, which is active in NER. The core complex associates with the 3-subunit CTD-kinase module TFIIK composed of mcs2/cyclin H, mcs6/cdk7 and pmh1/tfb3 to form the 10-subunit holoenzyme (holo-TFIIH) active in transcription. It depends on [4Fe-4S] cluster as a cofactor.

It is found in the nucleus. The enzyme catalyses Couples ATP hydrolysis with the unwinding of duplex DNA at the replication fork by translocating in the 5'-3' direction. This creates two antiparallel DNA single strands (ssDNA). The leading ssDNA polymer is the template for DNA polymerase III holoenzyme which synthesizes a continuous strand.. It carries out the reaction ATP + H2O = ADP + phosphate + H(+). In terms of biological role, ATP-dependent 5'-3' DNA helicase, component of the general transcription and DNA repair factor IIH (TFIIH) core complex, which is involved in general and transcription-coupled nucleotide excision repair (NER) of damaged DNA and, when complexed to TFIIK, in RNA transcription by RNA polymerase II. In NER, TFIIH acts by opening DNA around the lesion to allow the excision of the damaged oligonucleotide and its replacement by a new DNA fragment. The ATP-dependent helicase activity of XPD/rad15 is required for DNA opening. In transcription, TFIIH has an essential role in transcription initiation. When the pre-initiation complex (PIC) has been established, TFIIH is required for promoter opening and promoter escape. Phosphorylation of the C-terminal tail (CTD) of the largest subunit of RNA polymerase II by the kinase module TFIIK controls the initiation of transcription. XPD/rad15 acts by forming a bridge between TFIIK and the core-TFIIH complex. Involved in the maintenance of the fidelity of DNA replication. The polypeptide is General transcription and DNA repair factor IIH helicase subunit XPD (Schizosaccharomyces pombe (strain 972 / ATCC 24843) (Fission yeast)).